A 77-amino-acid polypeptide reads, in one-letter code: Conotoxin Vc6.14 (77 aa).

A signal peptide spans 1 to 19; sequence MEKLTILLLVAAVLMSTQA. Positions 20–37 are excised as a propeptide; it reads MFQGGGEKRPKDKIKFLS. Intrachain disulfides connect Cys-51-Cys-65, Cys-58-Cys-69, and Cys-64-Cys-74.

The protein belongs to the conotoxin O2 superfamily. In terms of tissue distribution, expressed by the venom duct.

The protein resides in the secreted. Functionally, inhibits voltage-gated ion channels. In Conus victoriae (Queen Victoria cone), this protein is Conotoxin Vc6.14.